The primary structure comprises 809 residues: Sodium/hydrogen exchanger 2 (809 aa).

7 helical membrane passes run 107-127 (IVPESCLLIMVGLLLGGIIFG), 138-158 (TDVFFLYLLPPIVLDAGYFMP), 169-189 (IFWYAVVGTLWNSIGIGVSLF), 209-229 (LFGSLISAVDPVAVLAVFENI), 237-257 (ILVFGESLLNDAVTVVLYNLF), 278-298 (FFVVGIGGVLIGIFLGFIAAF), and 308-328 (VIEPLFVFLYSYLSYITAEMF). N-linked (GlcNAc...) asparagine glycosylation is present at asparagine 350. 4 consecutive transmembrane segments (helical) span residues 361-381 (YFMKMLSSVSETLIFIFMGVS), 392-412 (AFVCFTLAFCLIWRALGVFVL), 430-450 (FIIAYGGLRGAICFALVFLLP), and 459-479 (LFITAAIVVIFFTVFILGITI). Composition is skewed to basic and acidic residues over residues 648 to 660 (IRKDNSLNRERRA) and 793 to 809 (RASEPGNRKSRLGSDKP). Disordered regions lie at residues 648–700 (IRKD…EADA) and 734–809 (EVDA…SDKP).

It belongs to the monovalent cation:proton antiporter 1 (CPA1) transporter (TC 2.A.36) family. In terms of assembly, interacts with CHP1 and CHP2. High levels in intestine and kidney. Strongly expressed in gastric epithelial cells, with particularly high expression levels in mucous cells.

The protein localises to the apical cell membrane. It catalyses the reaction Na(+)(in) + H(+)(out) = Na(+)(out) + H(+)(in). Functionally, plasma membrane Na(+)/H(+) antiporter. Mediates the electroneutral exchange of intracellular H(+) ions for extracellular Na(+). Major apical Na(+)/H(+) exchanger in the base of the colonic crypt. Controls in the colonic crypt intracellular pH (pHi) to direct colonic epithelial cell differentiation into the absorptive enterocyte lineage at the expense of the secretory lineage. The sequence is that of Sodium/hydrogen exchanger 2 (SLC9A2) from Oryctolagus cuniculus (Rabbit).